We begin with the raw amino-acid sequence, 527 residues long: CTP synthase (527 aa).

An amidoligase domain region spans residues 1–270 (MKYIFVTGGV…ADVLCQLLQL (270 aa)). Serine 12 is a binding site for CTP. Serine 12 contributes to the UTP binding site. ATP is bound by residues 13-18 (GLGKGI) and aspartate 70. Residues aspartate 70 and glutamate 145 each coordinate Mg(2+). Residues 152 to 154 (DIE), 191 to 196 (KTKPTQ), and lysine 227 contribute to the CTP site. UTP-binding positions include 191–196 (KTKPTQ) and lysine 227. The Glutamine amidotransferase type-1 domain maps to 292–525 (TIGIVSKYGK…VEACLKNRGK (234 aa)). Glycine 349 contributes to the L-glutamine binding site. Cysteine 376 (nucleophile; for glutamine hydrolysis) is an active-site residue. Residues 377-380 (LGFQ), glutamate 400, and arginine 455 contribute to the L-glutamine site. Active-site residues include histidine 498 and glutamate 500.

The protein belongs to the CTP synthase family. In terms of assembly, homotetramer.

The catalysed reaction is UTP + L-glutamine + ATP + H2O = CTP + L-glutamate + ADP + phosphate + 2 H(+). It catalyses the reaction L-glutamine + H2O = L-glutamate + NH4(+). The enzyme catalyses UTP + NH4(+) + ATP = CTP + ADP + phosphate + 2 H(+). Its pathway is pyrimidine metabolism; CTP biosynthesis via de novo pathway; CTP from UDP: step 2/2. Its activity is regulated as follows. Allosterically activated by GTP, when glutamine is the substrate; GTP has no effect on the reaction when ammonia is the substrate. The allosteric effector GTP functions by stabilizing the protein conformation that binds the tetrahedral intermediate(s) formed during glutamine hydrolysis. Inhibited by the product CTP, via allosteric rather than competitive inhibition. Its function is as follows. Catalyzes the ATP-dependent amination of UTP to CTP with either L-glutamine or ammonia as the source of nitrogen. Regulates intracellular CTP levels through interactions with the four ribonucleotide triphosphates. The chain is CTP synthase from Methanospirillum hungatei JF-1 (strain ATCC 27890 / DSM 864 / NBRC 100397 / JF-1).